We begin with the raw amino-acid sequence, 269 residues long: Tryptophan synthase alpha chain (269 aa).

Residues Glu-49 and Asp-60 each act as proton acceptor in the active site.

The protein belongs to the TrpA family. Tetramer of two alpha and two beta chains.

It catalyses the reaction (1S,2R)-1-C-(indol-3-yl)glycerol 3-phosphate + L-serine = D-glyceraldehyde 3-phosphate + L-tryptophan + H2O. It participates in amino-acid biosynthesis; L-tryptophan biosynthesis; L-tryptophan from chorismate: step 5/5. In terms of biological role, the alpha subunit is responsible for the aldol cleavage of indoleglycerol phosphate to indole and glyceraldehyde 3-phosphate. The polypeptide is Tryptophan synthase alpha chain (Buchnera aphidicola subsp. Schlechtendalia chinensis).